Here is a 505-residue protein sequence, read N- to C-terminus: ATP synthase subunit alpha (505 aa).

Residue 172-179 (GDRQIGKT) participates in ATP binding.

The protein belongs to the ATPase alpha/beta chains family. In terms of assembly, F-type ATPases have 2 components, CF(1) - the catalytic core - and CF(0) - the membrane proton channel. CF(1) has five subunits: alpha(3), beta(3), gamma(1), delta(1), epsilon(1). CF(0) has three main subunits: a(1), b(2) and c(9-12). The alpha and beta chains form an alternating ring which encloses part of the gamma chain. CF(1) is attached to CF(0) by a central stalk formed by the gamma and epsilon chains, while a peripheral stalk is formed by the delta and b chains.

The protein resides in the cell inner membrane. The enzyme catalyses ATP + H2O + 4 H(+)(in) = ADP + phosphate + 5 H(+)(out). In terms of biological role, produces ATP from ADP in the presence of a proton gradient across the membrane. The alpha chain is a regulatory subunit. This chain is ATP synthase subunit alpha, found in Syntrophobacter fumaroxidans (strain DSM 10017 / MPOB).